A 257-amino-acid chain; its full sequence is Asnovolin H dehydrogenase nvfC (257 aa).

A helical transmembrane segment spans residues 7–26; the sequence is YVLIITGSASGIGLATATIA. Isoleucine 11 is a binding site for NADP(+). Residues asparagine 57, asparagine 92, and asparagine 110 are each glycosylated (N-linked (GlcNAc...) asparagine). 4 residues coordinate NADP(+): arginine 119, tyrosine 151, lysine 155, and valine 184. Tyrosine 151 functions as the Proton donor in the catalytic mechanism. Residue lysine 155 is the Lowers pKa of active site Tyr of the active site.

Belongs to the short-chain dehydrogenases/reductases (SDR) family.

Its subcellular location is the membrane. The catalysed reaction is asnovolin H + A = chermesin D + AH2. Its pathway is secondary metabolite biosynthesis; terpenoid biosynthesis. Functionally, short chain dehydrogenase; part of the gene cluster that mediates the biosynthesis of novofumigatonin, a heavily oxygenated meroterpenoid containing a unique orthoester moiety. The first step of the pathway is the synthesis of 3,5-dimethylorsellinic acid (DMOA) by the polyketide synthase nvfA via condensation of one acetyl-CoA starter unit with 3 malonyl-CoA units and 2 methylations. DMOA is then converted to farnesyl-DMOA by the farnesyltransferase nvfB. Epoxydation by FAD-dependent monooxygenase nvfK, followed by a protonation-initiated cyclization catalyzed by the terpene cyclase nvfL leads to the production of asnavolin H. The short chain dehydrogenase nvfC then as a 3-OH dehydrogenase of asnovolin H to yield chemesin D. There are two branches to synthesize asnovolin A from chemesin D. In one branch, chemesin D undergoes Baeyer-Villiger oxidation by nvfH, methylation by nvfJ, and enoyl reduction by the nvfM D enoylreductase that reduces the double bond between C-5'and C-6', to form respectively asnovolin I, asnovolin K, and asnovolin A. In the other branch, the methylation precedes the Baeyer-Villiger oxidation and the enoyl reduction to yield asnovolin A via the asnovolin J intermediate. Asnovolin A is further converted to fumigatonoid A by the Fe(II)/2-oxoglutarate-dependent dioxygenase nvfI that catalyzes an endoperoxidation reaction. The alpha/beta hydrolase nvfD then acts as an epimerase that converts fumigatonoid A to its C-5' epimer, which then undergoes spontaneous or nvfD-catalyzed lactonization. The following step utilizes the ketoreductase nvfG to produce fumigatonoid B. The dioxygenase nvfE further converts fumigatonoid B into fumigatonoid C. Finally the Fe(II)/2-oxoglutarate-dependent dioxygenase nvfF catalyzes two rounds of oxidation to transform fumigatonoid C into the end product, novofumigatonin A. The sequence is that of Asnovolin H dehydrogenase nvfC from Aspergillus novofumigatus (strain IBT 16806).